The following is a 209-amino-acid chain: Uracil phosphoribosyltransferase (209 aa).

5-phospho-alpha-D-ribose 1-diphosphate is bound by residues R79, R104, and 131–139 (DPMLATGGS). Residues I194 and 199-201 (GDA) contribute to the uracil site. D200 provides a ligand contact to 5-phospho-alpha-D-ribose 1-diphosphate.

Belongs to the UPRTase family. Mg(2+) serves as cofactor.

It carries out the reaction UMP + diphosphate = 5-phospho-alpha-D-ribose 1-diphosphate + uracil. It functions in the pathway pyrimidine metabolism; UMP biosynthesis via salvage pathway; UMP from uracil: step 1/1. Its activity is regulated as follows. Allosterically activated by GTP. In terms of biological role, catalyzes the conversion of uracil and 5-phospho-alpha-D-ribose 1-diphosphate (PRPP) to UMP and diphosphate. The protein is Uracil phosphoribosyltransferase of Halalkalibacterium halodurans (strain ATCC BAA-125 / DSM 18197 / FERM 7344 / JCM 9153 / C-125) (Bacillus halodurans).